Reading from the N-terminus, the 327-residue chain is Phenylalanine--tRNA ligase alpha subunit (327 aa).

Glu252 contributes to the Mg(2+) binding site.

Belongs to the class-II aminoacyl-tRNA synthetase family. Phe-tRNA synthetase alpha subunit type 1 subfamily. In terms of assembly, tetramer of two alpha and two beta subunits. The cofactor is Mg(2+).

It localises to the cytoplasm. It carries out the reaction tRNA(Phe) + L-phenylalanine + ATP = L-phenylalanyl-tRNA(Phe) + AMP + diphosphate + H(+). The polypeptide is Phenylalanine--tRNA ligase alpha subunit (Klebsiella pneumoniae (strain 342)).